A 103-amino-acid chain; its full sequence is Matrix Gla protein (103 aa).

The N-terminal stretch at 1-19 is a signal peptide; that stretch reads MKSLVLLAILAALAVVTLC. Glutamate 21 is subject to 4-carboxyglutamate. A phosphoserine mark is found at serine 22, serine 25, and serine 28. In terms of domain architecture, Gla spans 51-97; sequence RAKVQERIRERSKPVHELNREACDDYRLCERYAMVYGYNAAYNRYFR. 4-carboxyglutamate occurs at positions 56, 60, 67, and 71. A disulfide bridge links cysteine 73 with cysteine 79. A propeptide spans 97–103 (removed in mature form; probably by carboxypeptidase N); the sequence is RERRGAK.

The protein belongs to the osteocalcin/matrix Gla protein family. Post-translationally, requires vitamin K-dependent gamma-carboxylation for its function.

Its subcellular location is the secreted. Functionally, associates with the organic matrix of bone and cartilage. Thought to act as an inhibitor of bone formation. The protein is Matrix Gla protein (MGP) of Pongo abelii (Sumatran orangutan).